Reading from the N-terminus, the 136-residue chain is Globin CTP-III (136 aa).

Residues 1–136 (LSADQISTVQ…TFFGMIFSKM (136 aa)) form the Globin domain. Histidine 87 provides a ligand contact to heme b.

It belongs to the globin family. Monomer.

This Chironomus thummi piger (Midge) protein is Globin CTP-III.